Here is a 387-residue protein sequence, read N- to C-terminus: Patatin-11 (387 aa).

The N-terminal stretch at 1 to 23 is a signal peptide; it reads MATTKSVLVLIFMILATTSSTFA. The PNPLA domain maps to 32-230; sequence LSTDGGGIKG…TVGDPALLSL (199 aa). The short motif at 36-41 is the GXGXXG element; it reads GGGIKG. Residues 75-79 carry the GXSXG motif; the sequence is GTSTG. Ser77 serves as the catalytic Nucleophile. N-linked (GlcNAc...) asparagine glycosylation is present at Asn115. Residue Asp216 is the Proton acceptor of the active site. Residues 216–218 carry the DGA/G motif; that stretch reads DGG. Positions 322–385 form a coiled coil; sequence ENALNGTTTE…DRKKLRANKA (64 aa). N-linked (GlcNAc...) asparagine glycosylation is present at Asn326.

It belongs to the patatin family. As to expression, tuber.

Its subcellular location is the vacuole. Functionally, probable lipolytic acyl hydrolase (LAH), an activity which is thought to be involved in the response of tubers to pathogens. This Solanum tuberosum (Potato) protein is Patatin-11.